The sequence spans 433 residues: Peptidoglycan glycosyltransferase RodA (433 aa).

The next 12 membrane-spanning stretches (helical) occupy residues 9 to 29 (FDYLLLLTMLALTSIGILFIY), 44 to 64 (YLKQIVWAVMGVVLMLSVSMY), 74 to 94 (TLIFAGFILLLIYTRLFGRYV), 100 to 120 (WIGVGEFGIQISEFAKIAYIL), 158 to 178 (LGTASVYLPIFLVMCFIAGFP), 181 to 201 (LIFAVVCVVLLTLLFTLLPLW), 221 to 241 (LSLFVFFSLSATSAVAVVGYL), 249 to 269 (YWITYALGMVSISYGASLLGV), 295 to 315 (WHIIQSMIAIGSGGAFGMGYL), 341 to 361 (WGFVGGVIVFGLYLLFFLHTL), 378 to 398 (GVLGMFLFHFVVNVGMTMGIM), and 400 to 420 (ITGIPLLLLSYGGSSLWTAMI).

It belongs to the SEDS family. MrdB/RodA subfamily.

The protein localises to the cell inner membrane. The enzyme catalyses [GlcNAc-(1-&gt;4)-Mur2Ac(oyl-L-Ala-gamma-D-Glu-L-Lys-D-Ala-D-Ala)](n)-di-trans,octa-cis-undecaprenyl diphosphate + beta-D-GlcNAc-(1-&gt;4)-Mur2Ac(oyl-L-Ala-gamma-D-Glu-L-Lys-D-Ala-D-Ala)-di-trans,octa-cis-undecaprenyl diphosphate = [GlcNAc-(1-&gt;4)-Mur2Ac(oyl-L-Ala-gamma-D-Glu-L-Lys-D-Ala-D-Ala)](n+1)-di-trans,octa-cis-undecaprenyl diphosphate + di-trans,octa-cis-undecaprenyl diphosphate + H(+). It functions in the pathway cell wall biogenesis; peptidoglycan biosynthesis. Its function is as follows. Peptidoglycan polymerase that is essential for cell wall elongation. The protein is Peptidoglycan glycosyltransferase RodA of Treponema pallidum (strain Nichols).